The chain runs to 123 residues: UPF0102 protein Pcar_2217 (123 aa).

It belongs to the UPF0102 family.

The protein is UPF0102 protein Pcar_2217 of Syntrophotalea carbinolica (strain DSM 2380 / NBRC 103641 / GraBd1) (Pelobacter carbinolicus).